A 125-amino-acid chain; its full sequence is DNA-directed RNA polymerases I and III subunit RPAC2 (125 aa).

It belongs to the archaeal Rpo11/eukaryotic RPB11/RPC19 RNA polymerase subunit family. Component of the RNA polymerase I (Pol I) and RNA polymerase III (Pol III) complexes consisting of 14 and 17 subunits, respectively.

It is found in the nucleus. In terms of biological role, DNA-dependent RNA polymerase catalyzes the transcription of DNA into RNA using the four ribonucleoside triphosphates as substrates. Common core component of RNA polymerases I and III which synthesize ribosomal RNA precursors and small RNAs, such as 5S rRNA and tRNAs, respectively. This Schizosaccharomyces pombe (strain 972 / ATCC 24843) (Fission yeast) protein is DNA-directed RNA polymerases I and III subunit RPAC2 (rpc19).